Here is a 203-residue protein sequence, read N- to C-terminus: Pyridoxal 5'-phosphate synthase subunit PdxT (203 aa).

52 to 54 (GES) lines the L-glutamine pocket. The Nucleophile role is filled by cysteine 84. L-glutamine-binding positions include arginine 116 and 144–145 (IR). Residues histidine 184 and glutamate 186 each act as charge relay system in the active site.

The protein belongs to the glutaminase PdxT/SNO family. In terms of assembly, in the presence of PdxS, forms a dodecamer of heterodimers. Only shows activity in the heterodimer.

It catalyses the reaction aldehydo-D-ribose 5-phosphate + D-glyceraldehyde 3-phosphate + L-glutamine = pyridoxal 5'-phosphate + L-glutamate + phosphate + 3 H2O + H(+). The enzyme catalyses L-glutamine + H2O = L-glutamate + NH4(+). It participates in cofactor biosynthesis; pyridoxal 5'-phosphate biosynthesis. In terms of biological role, catalyzes the hydrolysis of glutamine to glutamate and ammonia as part of the biosynthesis of pyridoxal 5'-phosphate. The resulting ammonia molecule is channeled to the active site of PdxS. The polypeptide is Pyridoxal 5'-phosphate synthase subunit PdxT (Aeropyrum pernix (strain ATCC 700893 / DSM 11879 / JCM 9820 / NBRC 100138 / K1)).